A 551-amino-acid polypeptide reads, in one-letter code: uncharacterized protein (551 aa).

4 disordered regions span residues 66 to 111 (GNNK…STNL), 130 to 165 (PEAT…EKSN), 180 to 229 (AFNP…LSNL), and 277 to 303 (AFTS…VPLS). Ser74 carries the phosphoserine modification. Polar residues-rich tracts occupy residues 92 to 111 (GFSN…STNL) and 143 to 156 (VVNT…GTQE). Low complexity predominate over residues 182 to 193 (NPSSVLPSNSSS). Residues 204 to 226 (KETYQPNTFRRSPLKNDTGSVEL) are compositionally biased toward polar residues. Low complexity predominate over residues 290-299 (TRPSSTRFPS).

This is an uncharacterized protein from Schizosaccharomyces pombe (strain 972 / ATCC 24843) (Fission yeast).